The sequence spans 130 residues: Small ribosomal subunit protein uS9 (130 aa).

This sequence belongs to the universal ribosomal protein uS9 family.

The chain is Small ribosomal subunit protein uS9 from Vibrio vulnificus (strain CMCP6).